The following is a 400-amino-acid chain: Acetate kinase (400 aa).

Asn10 is a Mg(2+) binding site. Lys17 contributes to the ATP binding site. A substrate-binding site is contributed by Arg91. Asp150 functions as the Proton donor/acceptor in the catalytic mechanism. Residues His210–Gly214, Asp285–Arg287, and Gly333–Asn337 contribute to the ATP site. Glu387 serves as a coordination point for Mg(2+).

It belongs to the acetokinase family. In terms of assembly, homodimer. The cofactor is Mg(2+). Requires Mn(2+) as cofactor.

The protein localises to the cytoplasm. The catalysed reaction is acetate + ATP = acetyl phosphate + ADP. It functions in the pathway metabolic intermediate biosynthesis; acetyl-CoA biosynthesis; acetyl-CoA from acetate: step 1/2. Its function is as follows. Catalyzes the formation of acetyl phosphate from acetate and ATP. Can also catalyze the reverse reaction. This chain is Acetate kinase, found in Erwinia tasmaniensis (strain DSM 17950 / CFBP 7177 / CIP 109463 / NCPPB 4357 / Et1/99).